The following is a 485-amino-acid chain: Glycogen synthase (485 aa).

Lys-21 lines the ADP-alpha-D-glucose pocket.

This sequence belongs to the glycosyltransferase 1 family. Bacterial/plant glycogen synthase subfamily.

It carries out the reaction [(1-&gt;4)-alpha-D-glucosyl](n) + ADP-alpha-D-glucose = [(1-&gt;4)-alpha-D-glucosyl](n+1) + ADP + H(+). It participates in glycan biosynthesis; glycogen biosynthesis. Its function is as follows. Synthesizes alpha-1,4-glucan chains using ADP-glucose. The protein is Glycogen synthase of Pseudomonas savastanoi pv. phaseolicola (strain 1448A / Race 6) (Pseudomonas syringae pv. phaseolicola (strain 1448A / Race 6)).